A 560-amino-acid polypeptide reads, in one-letter code: DNA ligase B (560 aa).

Lys124 functions as the N6-AMP-lysine intermediate in the catalytic mechanism.

The protein belongs to the NAD-dependent DNA ligase family. LigB subfamily.

It catalyses the reaction NAD(+) + (deoxyribonucleotide)n-3'-hydroxyl + 5'-phospho-(deoxyribonucleotide)m = (deoxyribonucleotide)n+m + AMP + beta-nicotinamide D-nucleotide.. In terms of biological role, catalyzes the formation of phosphodiester linkages between 5'-phosphoryl and 3'-hydroxyl groups in double-stranded DNA using NAD as a coenzyme and as the energy source for the reaction. The protein is DNA ligase B of Escherichia coli (strain K12 / DH10B).